The sequence spans 379 residues: 1-deoxy-D-xylulose 5-phosphate reductoisomerase (379 aa).

7 residues coordinate NADPH: Thr-10, Gly-11, Ser-12, Ile-13, Arg-38, Asn-39, and Asn-121. Lys-122 is a binding site for 1-deoxy-D-xylulose 5-phosphate. Glu-123 contacts NADPH. Residue Asp-147 coordinates Mn(2+). The 1-deoxy-D-xylulose 5-phosphate site is built by Ser-148, Glu-149, Ser-173, and His-196. Glu-149 contributes to the Mn(2+) binding site. Gly-202 is an NADPH binding site. Ser-209, Asn-214, Lys-215, and Glu-218 together coordinate 1-deoxy-D-xylulose 5-phosphate. Mn(2+) is bound at residue Glu-218.

This sequence belongs to the DXR family. Mg(2+) is required as a cofactor. Mn(2+) serves as cofactor.

It carries out the reaction 2-C-methyl-D-erythritol 4-phosphate + NADP(+) = 1-deoxy-D-xylulose 5-phosphate + NADPH + H(+). It functions in the pathway isoprenoid biosynthesis; isopentenyl diphosphate biosynthesis via DXP pathway; isopentenyl diphosphate from 1-deoxy-D-xylulose 5-phosphate: step 1/6. Functionally, catalyzes the NADPH-dependent rearrangement and reduction of 1-deoxy-D-xylulose-5-phosphate (DXP) to 2-C-methyl-D-erythritol 4-phosphate (MEP). The chain is 1-deoxy-D-xylulose 5-phosphate reductoisomerase from Chlamydia trachomatis serovar L2 (strain ATCC VR-902B / DSM 19102 / 434/Bu).